Reading from the N-terminus, the 396-residue chain is MALKTIDALDLAGKRVFIRVDFNVPLDEQRRVTDDARIRAALPTIKHAIQARAKVILGSHLGRPKGKPDDREKFSLEPAAQRLSELLKQDVILADDCIGDGVKKLVRDLKEGQVLLLENLRFHPQEEKNDEGFARELATLCDVWVNDAFGTAHRAHASTAGMAAFVKEKAAGFLIQKEVEYLGKALGSPERPFVALIGGAKVSDKIKVLENLIAKADAICIGGAMAYTFLKAQGVAVGKSLVEEDKLELARQILERAQARKVDLLLPVDHVCGAEPKDTAERVVVNDRAIPDGLMGLDIGPKTLDRYRQRIVDAKTVFWNGPMGLFEQKPWAEGTFGVAQAMAQSPAVTVVGGGDSAAAVEEAGLVSKMKHVSTGGGASLEFIEGRVLPGIQVLEG.

Substrate is bound by residues 21 to 23 (DFN), Arg-37, 60 to 63 (HLGR), Arg-121, and Arg-154. ATP-binding positions include Lys-205, Gly-296, Glu-327, and 353–356 (GGDS).

This sequence belongs to the phosphoglycerate kinase family. Monomer.

The protein resides in the cytoplasm. The catalysed reaction is (2R)-3-phosphoglycerate + ATP = (2R)-3-phospho-glyceroyl phosphate + ADP. It participates in carbohydrate degradation; glycolysis; pyruvate from D-glyceraldehyde 3-phosphate: step 2/5. This chain is Phosphoglycerate kinase, found in Anaeromyxobacter sp. (strain Fw109-5).